We begin with the raw amino-acid sequence, 346 residues long: MAHRPRWTLSQVAELFEKPLLDLLFEAQQVHRQHFDPRQVQVSTLLSIKTGACPEDCKYCPQSSRYKTGLEAERLMEVEQVLESARKAKAAGSTRFCMGAAWKNPNERDMPYLEQMVQGVKDLGLEACMTLGTLSESQAQRLANAGLDYYNHNLDTSPEFYGNIITTRTYQERLDTLEKVRDAGIKVCSGGIVGLGETVKDRAGLLLQLANLPTPPESVPINMLVKVKGTPLADNDDVDAFDFIRTIAVARIMMPTSYVRLSAGREQMNEQTQAMCFMAGANSIFYGCKLLTTPNPEEDKDLQLFRKLGLNPQQTAVLAGDNEQQQRLEQALMTPDTDEYYNAAAL.

In terms of domain architecture, Radical SAM core spans 38–256; it reads RQVQVSTLLS…IAVARIMMPT (219 aa). [4Fe-4S] cluster is bound by residues Cys53, Cys57, and Cys60. 4 residues coordinate [2Fe-2S] cluster: Cys97, Cys128, Cys188, and Arg260.

It belongs to the radical SAM superfamily. Biotin synthase family. In terms of assembly, homodimer. The cofactor is [4Fe-4S] cluster. It depends on [2Fe-2S] cluster as a cofactor.

It catalyses the reaction (4R,5S)-dethiobiotin + (sulfur carrier)-SH + 2 reduced [2Fe-2S]-[ferredoxin] + 2 S-adenosyl-L-methionine = (sulfur carrier)-H + biotin + 2 5'-deoxyadenosine + 2 L-methionine + 2 oxidized [2Fe-2S]-[ferredoxin]. It participates in cofactor biosynthesis; biotin biosynthesis; biotin from 7,8-diaminononanoate: step 2/2. Its function is as follows. Catalyzes the conversion of dethiobiotin (DTB) to biotin by the insertion of a sulfur atom into dethiobiotin via a radical-based mechanism. The protein is Biotin synthase of Shigella boydii serotype 18 (strain CDC 3083-94 / BS512).